A 213-amino-acid polypeptide reads, in one-letter code: tRNA (guanine-N(7)-)-methyltransferase (213 aa).

E44, E69, N96, and D118 together coordinate S-adenosyl-L-methionine. D118 is a catalytic residue. K122 is a substrate binding site. The segment at 124-129 (RHEKRR) is interaction with RNA. Substrate-binding positions include D154 and 192 to 195 (TEYE).

It belongs to the class I-like SAM-binding methyltransferase superfamily. TrmB family.

It catalyses the reaction guanosine(46) in tRNA + S-adenosyl-L-methionine = N(7)-methylguanosine(46) in tRNA + S-adenosyl-L-homocysteine. Its pathway is tRNA modification; N(7)-methylguanine-tRNA biosynthesis. In terms of biological role, catalyzes the formation of N(7)-methylguanine at position 46 (m7G46) in tRNA. The protein is tRNA (guanine-N(7)-)-methyltransferase of Latilactobacillus sakei subsp. sakei (strain 23K) (Lactobacillus sakei subsp. sakei).